A 469-amino-acid polypeptide reads, in one-letter code: DNA repair and recombination protein rad22 (469 aa).

The disordered stretch occupies residues 265–296 (PAANNHHSEKAGTQINNKDKGSHNSAKPVQRS). The span at 287–296 (HNSAKPVQRS) shows a compositional bias: polar residues. Phosphoserine is present on residues Ser296 and Ser319. Residues 429–469 (LHDSTTSHNKSDLMRTNSDPQSAMRSRENYDATVDKKAKKG) are disordered. The span at 431 to 452 (DSTTSHNKSDLMRTNSDPQSAM) shows a compositional bias: polar residues. Over residues 453-469 (RSRENYDATVDKKAKKG) the composition is skewed to basic and acidic residues.

It belongs to the RAD52 family. As to quaternary structure, interacts with rhp51.

Its subcellular location is the nucleus. Functionally, active in the repair of DNA damage and in mating-type switching. Probably involved in the repair of DNA double-strands breaks. Has a role in promoting S phase completion. This is DNA repair and recombination protein rad22 (rad22) from Schizosaccharomyces pombe (strain 972 / ATCC 24843) (Fission yeast).